A 263-amino-acid chain; its full sequence is Trans-aconitate 2-methyltransferase (263 aa).

The protein belongs to the methyltransferase superfamily. Tam family.

The protein resides in the cytoplasm. The enzyme catalyses trans-aconitate + S-adenosyl-L-methionine = (E)-3-(methoxycarbonyl)pent-2-enedioate + S-adenosyl-L-homocysteine. In terms of biological role, catalyzes the S-adenosylmethionine monomethyl esterification of trans-aconitate. This chain is Trans-aconitate 2-methyltransferase, found in Mycobacterium ulcerans (strain Agy99).